Here is a 105-residue protein sequence, read N- to C-terminus: Serine protease inhibitor Kazal-type 8 (105 aa).

The N-terminal stretch at 1 to 21 is a signal peptide; it reads MKVIFSVAVLVLASSVWTSLA. Intrachain disulfides connect cysteine 44–cysteine 78, cysteine 51–cysteine 75, and cysteine 64–cysteine 96. One can recognise a Kazal-like domain in the interval 44–98; that stretch reads CIKNIQLCWILSYFKVSEPICGSNQVTYEGECHLCSGILYEDRTVIKVHDGPCEH.

As to expression, expressed in epydiymis, in the cauda, corpus and caput.

The protein localises to the secreted. Functionally, probable serine protease inhibitor. In Mus musculus (Mouse), this protein is Serine protease inhibitor Kazal-type 8 (Spink8).